The chain runs to 237 residues: Leucyl/phenylalanyl-tRNA--protein transferase (237 aa).

The protein belongs to the L/F-transferase family.

The protein localises to the cytoplasm. It carries out the reaction N-terminal L-lysyl-[protein] + L-leucyl-tRNA(Leu) = N-terminal L-leucyl-L-lysyl-[protein] + tRNA(Leu) + H(+). The enzyme catalyses N-terminal L-arginyl-[protein] + L-leucyl-tRNA(Leu) = N-terminal L-leucyl-L-arginyl-[protein] + tRNA(Leu) + H(+). The catalysed reaction is L-phenylalanyl-tRNA(Phe) + an N-terminal L-alpha-aminoacyl-[protein] = an N-terminal L-phenylalanyl-L-alpha-aminoacyl-[protein] + tRNA(Phe). In terms of biological role, functions in the N-end rule pathway of protein degradation where it conjugates Leu, Phe and, less efficiently, Met from aminoacyl-tRNAs to the N-termini of proteins containing an N-terminal arginine or lysine. The polypeptide is Leucyl/phenylalanyl-tRNA--protein transferase (aat) (Vibrio vulnificus (strain CMCP6)).